Here is a 176-residue protein sequence, read N- to C-terminus: Crossover junction endodeoxyribonuclease RuvC (176 aa).

Active-site residues include aspartate 9, glutamate 69, and aspartate 141. Mg(2+) is bound by residues aspartate 9, glutamate 69, and aspartate 141.

The protein belongs to the RuvC family. As to quaternary structure, homodimer which binds Holliday junction (HJ) DNA. The HJ becomes 2-fold symmetrical on binding to RuvC with unstacked arms; it has a different conformation from HJ DNA in complex with RuvA. In the full resolvosome a probable DNA-RuvA(4)-RuvB(12)-RuvC(2) complex forms which resolves the HJ. It depends on Mg(2+) as a cofactor.

It localises to the cytoplasm. It catalyses the reaction Endonucleolytic cleavage at a junction such as a reciprocal single-stranded crossover between two homologous DNA duplexes (Holliday junction).. The RuvA-RuvB-RuvC complex processes Holliday junction (HJ) DNA during genetic recombination and DNA repair. Endonuclease that resolves HJ intermediates. Cleaves cruciform DNA by making single-stranded nicks across the HJ at symmetrical positions within the homologous arms, yielding a 5'-phosphate and a 3'-hydroxyl group; requires a central core of homology in the junction. The consensus cleavage sequence is 5'-(A/T)TT(C/G)-3'. Cleavage occurs on the 3'-side of the TT dinucleotide at the point of strand exchange. HJ branch migration catalyzed by RuvA-RuvB allows RuvC to scan DNA until it finds its consensus sequence, where it cleaves and resolves the cruciform DNA. This Chromobacterium violaceum (strain ATCC 12472 / DSM 30191 / JCM 1249 / CCUG 213 / NBRC 12614 / NCIMB 9131 / NCTC 9757 / MK) protein is Crossover junction endodeoxyribonuclease RuvC.